The chain runs to 473 residues: MKTDNSTFLAQQIVRLRRRDQIRRLMQRDKTPLAILFMAAVVGTLTGLVGVAFEKAVSWVQNMRIGALVQVADHAFLLWPLAFILSALLAMVGYFLVRKFAPEAGGSGIPEIEGALEELRPVRWWRVLPVKFIGGMGTLGAGMVLGREGPTVQIGGNLGRMVLDVFRMRSAEARHTLLATGAAAGLSAAFNAPLAGILFIIEEMRPQFRYNLISIKAVFTGVIMSSIVFRIFNGEAPIIEVGKLSDAPVNTLWLYLILGIIFGCVGPVFNSLVLRTQDMFQRFHGGEIKKWVLMGGAIGGLCGILGLIEPEAAGGGFNLIPIAAAGNFSVGLLLFIFITRVVTTLLCFSSGAPGGIFAPMLALGTLLGTAFGMAAAVLFPQYHLEAGTFAIAGMGALMAASVRAPLTGIVLVLEMTDNYQLILPMIITCLGATLLAQFLGGKPLYSTILARTLAKQDAEQAAKNQNAPAGENT.

The Cytoplasmic segment spans residues 1–32 (MKTDNSTFLAQQIVRLRRRDQIRRLMQRDKTP). The chain crosses the membrane as a helical span at residues 33–69 (LAILFMAAVVGTLTGLVGVAFEKAVSWVQNMRIGALV). Over 70 to 76 (QVADHAF) the chain is Periplasmic. Residues 77-100 (LLWPLAFILSALLAMVGYFLVRKF) traverse the membrane as a helical segment. Residues 106–110 (GSGIP) carry the Selectivity filter part_1 motif. Ser107 is a binding site for chloride. Residues 109-116 (IPEIEGAL) constitute an intramembrane region (helical). The Cytoplasmic portion of the chain corresponds to 117 to 123 (EELRPVR). A run of 2 helical transmembrane segments spans residues 124 to 141 (WWRVLPVKFIGGMGTLGA) and 148 to 166 (EGPTVQIGGNLGRMVLDVF). Positions 146–150 (GREGP) match the Selectivity filter part_2 motif. The Cytoplasmic portion of the chain corresponds to 167 to 176 (RMRSAEARHT). 2 consecutive intramembrane regions (helical) follow at residues 177–189 (LLATGAAAGLSAA) and 193–201 (PLAGILFII). Residues 202–214 (EEMRPQFRYNLIS) lie on the Cytoplasmic side of the membrane. The chain crosses the membrane as a helical span at residues 215-232 (IKAVFTGVIMSSIVFRIF). Topologically, residues 233–252 (NGEAPIIEVGKLSDAPVNTL) are periplasmic. A helical membrane pass occupies residues 253–281 (WLYLILGIIFGCVGPVFNSLVLRTQDMFQ). The Cytoplasmic portion of the chain corresponds to 282–287 (RFHGGE). The chain crosses the membrane as a helical span at residues 288 to 309 (IKKWVLMGGAIGGLCGILGLIE). Residues 310 to 329 (PEAAGGGFNLIPIAAAGNFS) lie on the Periplasmic side of the membrane. A run of 2 helical transmembrane segments spans residues 330-349 (VGLLLFIFITRVVTTLLCFS) and 355-376 (GIFAPMLALGTLLGTAFGMAAA). A Selectivity filter part_3 motif is present at residues 355-359 (GIFAP). Residues Ile356 and Phe357 each coordinate chloride. At 377-386 (VLFPQYHLEA) the chain is on the periplasmic side. An intramembrane region (helical) is located at residues 387–401 (GTFAIAGMGALMAAS). Residues 402–404 (VRA) constitute an intramembrane region (note=Loop between two helices). The segment at residues 405 to 416 (PLTGIVLVLEMT) is an intramembrane region (helical). Residues 417-421 (DNYQL) constitute an intramembrane region (note=Loop between two helices). Residues 422–438 (ILPMIITCLGATLLAQF) traverse the membrane as a helical segment. Over 439–473 (LGGKPLYSTILARTLAKQDAEQAAKNQNAPAGENT) the chain is Cytoplasmic. Tyr445 is a binding site for chloride.

This sequence belongs to the chloride channel (TC 2.A.49) family. ClcA subfamily. Homodimer.

It localises to the cell inner membrane. It carries out the reaction 2 chloride(in) + H(+)(out) = 2 chloride(out) + H(+)(in). Its function is as follows. Proton-coupled chloride transporter. Functions as antiport system and exchanges two chloride ions for 1 proton. Probably acts as an electrical shunt for an outwardly-directed proton pump that is linked to amino acid decarboxylation, as part of the extreme acid resistance (XAR) response. The polypeptide is H(+)/Cl(-) exchange transporter ClcA (Salmonella schwarzengrund (strain CVM19633)).